The sequence spans 238 residues: MRFYRPLGRISALTFDLDDTLYDNRPVILRTEREALTFVQNYHPALRSFQNEDLQRLRQAVREAEPEIYHDVTRWRFRSIEQAMLDAGLSAEEASAGAHAAMINFAKWRSRIDVPQQTHDTLKQLAKKWPLVAITNGNAQPELFGLGDYFEFVLRAGPHGRSKPFSDMYFLAAEKLNVPIGEILHVGDDLTTDVGGAIRSGMQACWIRPENGDLMQTWDSRLLPHLEISRLASLTSLI.

Asp16 functions as the Nucleophile in the catalytic mechanism. 3 residues coordinate Mg(2+): Asp16, Asp18, and Asp188. Residue 16–18 (DLD) participates in substrate binding.

This sequence belongs to the HAD-like hydrolase superfamily. Requires Mg(2+) as cofactor. It depends on Mn(2+) as a cofactor. Co(2+) serves as cofactor. The cofactor is Zn(2+).

It carries out the reaction 5-amino-6-(5-phospho-D-ribitylamino)uracil + H2O = 5-amino-6-(D-ribitylamino)uracil + phosphate. It participates in cofactor biosynthesis; riboflavin biosynthesis; 5-amino-6-(D-ribitylamino)uracil from GTP: step 4/4. Its function is as follows. Catalyzes the dephosphorylation of 5-amino-6-(5-phospho-D-ribitylamino)uracil, and thus could be involved in the riboflavin biosynthesis pathway. Is also able to dephosphorylate flavin mononucleotide (FMN) and other phosphoric acid esters. YigB is important for the formation of dormant persister cells. In Escherichia coli (strain K12), this protein is 5-amino-6-(5-phospho-D-ribitylamino)uracil phosphatase YigB (yigB).